The following is a 735-amino-acid chain: E3 UFM1-protein ligase 1 homolog (735 aa).

The tract at residues 389 to 445 (RLEAEKKKQGGAKAAVKVQEETDDWGDGKKGGKGGKKNAKSVKGGSKSSAPSTSSNL) is disordered. The segment covering 419–428 (GGKGGKKNAK) has biased composition (basic residues). Residues 429-445 (SVKGGSKSSAPSTSSNL) show a composition bias toward low complexity.

It belongs to the UFL1 family.

E3 UFM1-protein ligase that mediates ufmylation of target proteins. The chain is E3 UFM1-protein ligase 1 homolog (ufl-1) from Caenorhabditis elegans.